Reading from the N-terminus, the 103-residue chain is Histone H4 (103 aa).

At Lys6 the chain carries N6-acetyl-N6-methyllysine; alternate. An N6-methyllysine; alternate mark is found at Lys6, Lys9, and Lys13. An N6-acetyl-N6-methyllysine; alternate modification is found at Lys13. Residues 17 to 21 (KRHRK) mediate DNA binding. Position 92 is an N6-glutaryllysine (Lys92).

The protein belongs to the histone H4 family. As to quaternary structure, the nucleosome is a histone octamer containing two molecules each of H2A, H2B, H3 and H4 assembled in one H3-H4 heterotetramer and two H2A-H2B heterodimers. The octamer wraps approximately 147 bp of DNA. Glutarylation at Lys-92 (H4K91glu) destabilizes nucleosomes by promoting dissociation of the H2A-H2B dimers from nucleosomes.

It is found in the nucleus. It localises to the chromosome. Core component of nucleosome. Nucleosomes wrap and compact DNA into chromatin, limiting DNA accessibility to the cellular machineries which require DNA as a template. Histones thereby play a central role in transcription regulation, DNA repair, DNA replication and chromosomal stability. DNA accessibility is regulated via a complex set of post-translational modifications of histones, also called histone code, and nucleosome remodeling. The protein is Histone H4 (ahsb4) of Blastobotrys adeninivorans (Yeast).